The following is an 855-amino-acid chain: DNA mismatch repair protein MutS (855 aa).

ATP is bound at residue 616–623 (GPNMGGKS).

Belongs to the DNA mismatch repair MutS family.

This protein is involved in the repair of mismatches in DNA. It is possible that it carries out the mismatch recognition step. This protein has a weak ATPase activity. This Salmonella gallinarum (strain 287/91 / NCTC 13346) protein is DNA mismatch repair protein MutS.